Reading from the N-terminus, the 597-residue chain is Formate--tetrahydrofolate ligase (597 aa).

Residue 84 to 91 (TPLGEGKS) coordinates ATP.

This sequence belongs to the formate--tetrahydrofolate ligase family.

The enzyme catalyses (6S)-5,6,7,8-tetrahydrofolate + formate + ATP = (6R)-10-formyltetrahydrofolate + ADP + phosphate. It functions in the pathway one-carbon metabolism; tetrahydrofolate interconversion. This chain is Formate--tetrahydrofolate ligase, found in Dehalococcoides mccartyi (strain CBDB1).